Consider the following 191-residue polypeptide: Cytochrome c oxidase assembly protein CtaG (191 aa).

At 1–9 the chain is on the cytoplasmic side; the sequence is MSLSPHQKT. The chain crosses the membrane as a helical; Signal-anchor for type II membrane protein span at residues 10-30; sequence AGGLVLVVAVMGAASFAAVPF. The Periplasmic segment spans residues 31–191; it reads YNWFCRVTGF…LAAESATDVN (161 aa).

The protein belongs to the COX11/CtaG family.

It is found in the cell inner membrane. In terms of biological role, exerts its effect at some terminal stage of cytochrome c oxidase synthesis, probably by being involved in the insertion of the copper B into subunit I. This is Cytochrome c oxidase assembly protein CtaG from Cereibacter sphaeroides (strain ATCC 17023 / DSM 158 / JCM 6121 / CCUG 31486 / LMG 2827 / NBRC 12203 / NCIMB 8253 / ATH 2.4.1.) (Rhodobacter sphaeroides).